A 275-amino-acid chain; its full sequence is Tryptophan synthase alpha chain (275 aa).

Catalysis depends on proton acceptor residues E51 and E62.

The protein belongs to the TrpA family. As to quaternary structure, tetramer of two alpha and two beta chains.

The catalysed reaction is (1S,2R)-1-C-(indol-3-yl)glycerol 3-phosphate + L-serine = D-glyceraldehyde 3-phosphate + L-tryptophan + H2O. It functions in the pathway amino-acid biosynthesis; L-tryptophan biosynthesis; L-tryptophan from chorismate: step 5/5. The alpha subunit is responsible for the aldol cleavage of indoleglycerol phosphate to indole and glyceraldehyde 3-phosphate. The polypeptide is Tryptophan synthase alpha chain (Caulobacter sp. (strain K31)).